The primary structure comprises 342 residues: Ferredoxin--NADP reductase (342 aa).

FAD is bound by residues Cys-17, Asp-36, Gln-44, Tyr-49, Val-89, Phe-124, Asp-289, and Thr-330.

This sequence belongs to the ferredoxin--NADP reductase type 2 family. In terms of assembly, homodimer. The cofactor is FAD.

It catalyses the reaction 2 reduced [2Fe-2S]-[ferredoxin] + NADP(+) + H(+) = 2 oxidized [2Fe-2S]-[ferredoxin] + NADPH. The polypeptide is Ferredoxin--NADP reductase (Bradyrhizobium diazoefficiens (strain JCM 10833 / BCRC 13528 / IAM 13628 / NBRC 14792 / USDA 110)).